Consider the following 311-residue polypeptide: Olfactory receptor 2A5 (311 aa).

The Extracellular portion of the chain corresponds to 1 to 24 (MTKNQTWVTEFILLGFPLSLRIQM). Asn-4 is a glycosylation site (N-linked (GlcNAc...) asparagine). The chain crosses the membrane as a helical span at residues 25 to 48 (LLSGLFSLLYVFTLLGNGAILGLI). The Cytoplasmic segment spans residues 49–56 (WLDSRLHT). A helical membrane pass occupies residues 57 to 78 (PMYFFLSHLAIIDISYASNNVP). Topologically, residues 79–100 (KMLTNLGLNKRKTISFVPCTMQ) are extracellular. Cys-97 and Cys-189 are disulfide-bonded. Residues 101-120 (TFLYMAFAHTECLILVMMSY) traverse the membrane as a helical segment. Residues 121 to 139 (DRYMAICHPLQYSVIMRWG) lie on the Cytoplasmic side of the membrane. The chain crosses the membrane as a helical span at residues 140–158 (VCTVLAVTSWACGSLLALV). At 159–196 (HVVLILRLPFCGPHEINHFFCEILSVLKLACADTWLNQ) the chain is on the extracellular side. The chain crosses the membrane as a helical span at residues 197–219 (VVIFAASVFILVGPLCLVLVSYS). Topologically, residues 220 to 236 (RILAAILRIQSGEGRRK) are cytoplasmic. Residues 237–259 (AFSTCSSHLCMVGLFFGSAIVMY) traverse the membrane as a helical segment. Topologically, residues 260-272 (MAPKSRHPEEQQK) are extracellular. Residues 273 to 292 (VLSLFYSLFNPMLNPLIYSL) traverse the membrane as a helical segment. Residues 293–311 (RNAEVKGALKRVLWKQRSK) are Cytoplasmic-facing.

It belongs to the G-protein coupled receptor 1 family.

Its subcellular location is the cell membrane. Functionally, odorant receptor. In Homo sapiens (Human), this protein is Olfactory receptor 2A5 (OR2A5).